Consider the following 261-residue polypeptide: Acyl-[acyl-carrier-protein]--UDP-N-acetylglucosamine O-acyltransferase (261 aa).

This sequence belongs to the transferase hexapeptide repeat family. LpxA subfamily. Homotrimer.

The protein resides in the cytoplasm. The enzyme catalyses a (3R)-hydroxyacyl-[ACP] + UDP-N-acetyl-alpha-D-glucosamine = a UDP-3-O-[(3R)-3-hydroxyacyl]-N-acetyl-alpha-D-glucosamine + holo-[ACP]. Its pathway is glycolipid biosynthesis; lipid IV(A) biosynthesis; lipid IV(A) from (3R)-3-hydroxytetradecanoyl-[acyl-carrier-protein] and UDP-N-acetyl-alpha-D-glucosamine: step 1/6. Its function is as follows. Involved in the biosynthesis of lipid A, a phosphorylated glycolipid that anchors the lipopolysaccharide to the outer membrane of the cell. The protein is Acyl-[acyl-carrier-protein]--UDP-N-acetylglucosamine O-acyltransferase of Sulfurimonas denitrificans (strain ATCC 33889 / DSM 1251) (Thiomicrospira denitrificans (strain ATCC 33889 / DSM 1251)).